We begin with the raw amino-acid sequence, 362 residues long: Epoxyqueuosine reductase (362 aa).

Asp-143 (proton donor) is an active-site residue. In terms of domain architecture, 4Fe-4S ferredoxin-type spans 191 to 220 (PDSPKHQDSCGKCQACIKLCPTGAIQPGKM). [4Fe-4S] cluster is bound by residues Cys-200, Cys-203, Cys-206, Cys-210, Cys-226, Cys-253, Cys-256, and Cys-260.

The protein belongs to the QueG family. In terms of assembly, monomer. It depends on cob(II)alamin as a cofactor. The cofactor is [4Fe-4S] cluster.

The protein localises to the cytoplasm. It catalyses the reaction epoxyqueuosine(34) in tRNA + AH2 = queuosine(34) in tRNA + A + H2O. It participates in tRNA modification; tRNA-queuosine biosynthesis. In terms of biological role, catalyzes the conversion of epoxyqueuosine (oQ) to queuosine (Q), which is a hypermodified base found in the wobble positions of tRNA(Asp), tRNA(Asn), tRNA(His) and tRNA(Tyr). This chain is Epoxyqueuosine reductase, found in Francisella cf. novicida (strain Fx1).